The sequence spans 317 residues: ADP-L-glycero-D-manno-heptose-6-epimerase (317 aa).

Residues 10–11, 31–32, Lys38, Lys53, 75–79, and Asn92 each bind NADP(+); these read FI, DD, and QGACS. Residue Tyr139 is the Proton acceptor of the active site. Lys143 is an NADP(+) binding site. Residue Asn166 coordinates substrate. Val167 and Lys175 together coordinate NADP(+). Catalysis depends on Lys175, which acts as the Proton acceptor. Substrate is bound by residues Gly177, His184, 198 to 201, Arg211, and Tyr275; that span reads FEGV.

Belongs to the NAD(P)-dependent epimerase/dehydratase family. HldD subfamily. Homopentamer. NADP(+) serves as cofactor.

The enzyme catalyses ADP-D-glycero-beta-D-manno-heptose = ADP-L-glycero-beta-D-manno-heptose. It participates in nucleotide-sugar biosynthesis; ADP-L-glycero-beta-D-manno-heptose biosynthesis; ADP-L-glycero-beta-D-manno-heptose from D-glycero-beta-D-manno-heptose 7-phosphate: step 4/4. Functionally, catalyzes the interconversion between ADP-D-glycero-beta-D-manno-heptose and ADP-L-glycero-beta-D-manno-heptose via an epimerization at carbon 6 of the heptose. The protein is ADP-L-glycero-D-manno-heptose-6-epimerase of Shewanella piezotolerans (strain WP3 / JCM 13877).